A 489-amino-acid chain; its full sequence is Cytochrome P450 2C41 (489 aa).

Cys-434 serves as a coordination point for heme.

The protein belongs to the cytochrome P450 family. The cofactor is heme.

It localises to the endoplasmic reticulum membrane. The protein localises to the microsome membrane. It carries out the reaction an organic molecule + reduced [NADPH--hemoprotein reductase] + O2 = an alcohol + oxidized [NADPH--hemoprotein reductase] + H2O + H(+). In terms of biological role, cytochromes P450 are a group of heme-thiolate monooxygenases. In liver microsomes, this enzyme is involved in an NADPH-dependent electron transport pathway. It oxidizes a variety of structurally unrelated compounds, including steroids, fatty acids, and xenobiotics. In Canis lupus familiaris (Dog), this protein is Cytochrome P450 2C41 (CYP2C41).